The sequence spans 287 residues: Pantothenate synthetase (287 aa).

37–44 is a binding site for ATP; sequence MGALHEGH. The active-site Proton donor is His-44. A (R)-pantoate-binding site is contributed by Gln-68. Beta-alanine is bound at residue Gln-68. Residue 154–157 coordinates ATP; the sequence is GQKD. Gln-160 lines the (R)-pantoate pocket. ATP is bound by residues Val-183 and 191-194; that span reads LSSR.

Belongs to the pantothenate synthetase family. As to quaternary structure, homodimer.

It is found in the cytoplasm. It catalyses the reaction (R)-pantoate + beta-alanine + ATP = (R)-pantothenate + AMP + diphosphate + H(+). It functions in the pathway cofactor biosynthesis; (R)-pantothenate biosynthesis; (R)-pantothenate from (R)-pantoate and beta-alanine: step 1/1. Catalyzes the condensation of pantoate with beta-alanine in an ATP-dependent reaction via a pantoyl-adenylate intermediate. The polypeptide is Pantothenate synthetase (Leifsonia xyli subsp. xyli (strain CTCB07)).